The chain runs to 327 residues: GMP reductase (327 aa).

The active-site Thioimidate intermediate is Cys-175. 204 to 227 contributes to the NADP(+) binding site; sequence IIADGGIRTNGDVAKSIRFGATMV.

It belongs to the IMPDH/GMPR family. GuaC type 2 subfamily.

The enzyme catalyses IMP + NH4(+) + NADP(+) = GMP + NADPH + 2 H(+). Catalyzes the irreversible NADPH-dependent deamination of GMP to IMP. It functions in the conversion of nucleobase, nucleoside and nucleotide derivatives of G to A nucleotides, and in maintaining the intracellular balance of A and G nucleotides. This Bacillus cereus (strain ZK / E33L) protein is GMP reductase.